The sequence spans 351 residues: Uroporphyrinogen decarboxylase (351 aa).

Residues 26-30 (RQAGR), Asp-75, Tyr-151, Ser-206, and His-321 each bind substrate.

Belongs to the uroporphyrinogen decarboxylase family. In terms of assembly, homodimer.

It localises to the cytoplasm. It catalyses the reaction uroporphyrinogen III + 4 H(+) = coproporphyrinogen III + 4 CO2. The protein operates within porphyrin-containing compound metabolism; protoporphyrin-IX biosynthesis; coproporphyrinogen-III from 5-aminolevulinate: step 4/4. Catalyzes the decarboxylation of four acetate groups of uroporphyrinogen-III to yield coproporphyrinogen-III. The sequence is that of Uroporphyrinogen decarboxylase from Koribacter versatilis (strain Ellin345).